The sequence spans 282 residues: MAASTMSVCSSACSDSWQVDACPESCCEPHCCALSCCAPAPCLTLVCTPVSRVSSPCCQAACEPSPCQSGCTSSCTPSCCQQSSCQPACCTSSPCQQACCVPVCCKPVCCLPTCSKDSSSCCQQSSCQPTCCASSSSQQSCCVPVCCKPVCYVPTCSEDSSSCCQQSSCHPACCTSSPCQQACCVPVRCKPVCCKPICCVPVCSGASTSCCQQSSCQPACCTTSCCRPSSSVSLLCRPVCRPACCMPVSSCCAPASSCQASCCRPASCVSLLCRPACSRPAC.

24 tandem repeats follow at residues 26–30, 31–35, 36–40, 57–61, 79–83, 89–93, 99–103, 104–108, 109–113, 121–125, 131–135, 141–145, 146–150, 163–167, 173–177, 183–187, 193–197, 198–202, 210–214, 220–224, 225–229, 244–248, 251–255, and 262–266. Positions 26 to 266 are 24 X 5 AA repeats of C-C-X(3); that stretch reads CCEPHCCALS…SCQASCCRPA (241 aa).

The protein belongs to the KRTAP type 10 family. Interacts with hair keratins. In terms of tissue distribution, restricted to a narrow region of the hair fiber cuticle, lying approximately 20 cell layers above the apex of the dermal papilla of the hair root; not detected in any other tissues.

In the hair cortex, hair keratin intermediate filaments are embedded in an interfilamentous matrix, consisting of hair keratin-associated proteins (KRTAP), which are essential for the formation of a rigid and resistant hair shaft through their extensive disulfide bond cross-linking with abundant cysteine residues of hair keratins. The matrix proteins include the high-sulfur and high-glycine-tyrosine keratins. The polypeptide is Keratin-associated protein 10-1 (KRTAP10-1) (Homo sapiens (Human)).